Here is a 172-residue protein sequence, read N- to C-terminus: Protein-export protein SecB (172 aa).

Belongs to the SecB family. As to quaternary structure, homotetramer, a dimer of dimers. One homotetramer interacts with 1 SecA dimer.

It localises to the cytoplasm. In terms of biological role, one of the proteins required for the normal export of preproteins out of the cell cytoplasm. It is a molecular chaperone that binds to a subset of precursor proteins, maintaining them in a translocation-competent state. It also specifically binds to its receptor SecA. This chain is Protein-export protein SecB, found in Maricaulis maris (strain MCS10) (Caulobacter maris).